The chain runs to 449 residues: NADH-quinone oxidoreductase subunit H (449 aa).

The next 9 helical transmembrane spans lie at 29-49 (ILLKAVAVFAFLLLMTLFAIV), 96-116 (PIFILAPIVSAVPAFLAFAVI), 136-156 (LPVSVLYLLAAASLGVYGLIL), 177-197 (IISYEVAMGLAFVAVFIYAGT), 211-231 (WYIVLVPSFVLYCISMVGETN), 259-279 (FFFLAEYINMVTVSAIATTLF), 298-318 (WVPLIWFVLKLLAFLFFFIWL), 330-350 (FMSFGWKVLIPVGLVWVLAVA), and 365-385 (WLVGFGVVVGILLIVALIDPG). Over residues 393–402 (LEEAEQRKLA) the composition is skewed to basic and acidic residues. Positions 393–449 (LEEAEQRKLAEAPSLDRIPWPPPPQAAGRGRPAVSAGASANGSSTVIPADPGPRQER) are disordered. The span at 418-436 (AAGRGRPAVSAGASANGSS) shows a compositional bias: low complexity.

Belongs to the complex I subunit 1 family. As to quaternary structure, NDH-1 is composed of 14 different subunits. Subunits NuoA, H, J, K, L, M, N constitute the membrane sector of the complex.

The protein localises to the cell membrane. The enzyme catalyses a quinone + NADH + 5 H(+)(in) = a quinol + NAD(+) + 4 H(+)(out). NDH-1 shuttles electrons from NADH, via FMN and iron-sulfur (Fe-S) centers, to quinones in the respiratory chain. The immediate electron acceptor for the enzyme in this species is believed to be ubiquinone. Couples the redox reaction to proton translocation (for every two electrons transferred, four hydrogen ions are translocated across the cytoplasmic membrane), and thus conserves the redox energy in a proton gradient. This subunit may bind ubiquinone. The protein is NADH-quinone oxidoreductase subunit H of Frankia casuarinae (strain DSM 45818 / CECT 9043 / HFP020203 / CcI3).